The chain runs to 160 residues: Probable transcriptional regulator YgiV (160 aa).

Its function is as follows. Represses expression of mcbR. The protein is Probable transcriptional regulator YgiV (ygiV) of Escherichia coli O157:H7.